Here is a 1682-residue protein sequence, read N- to C-terminus: 1-phosphatidylinositol 4,5-bisphosphate phosphodiesterase eta-1 (1682 aa).

The 109-residue stretch at 20 to 128 (SVMQSGTQMI…WITGLKYLMA (109 aa)) folds into the PH domain. 3 consecutive EF-hand domains span residues 142–177 (THDQWVKQTFEEADKNGDGLLNIEEIHQLMHKLNVN), 178–214 (LPRRKVRQMFQEADTDENQGTLTFEEFCVFYKMMSLR), and 226–246 (DKKDHLTVEELAQFLKVEQKM). Ca(2+)-binding residues include Asp-155, Asn-157, Asp-159, and Glu-166. Residues 299–444 (QDMDQPLCNY…LKGKILVKGK (146 aa)) enclose the PI-PLC X-box domain. His-314 is an active-site residue. Positions 315, 344, and 346 each coordinate Ca(2+). The active site involves His-358. Glu-393 is a Ca(2+) binding site. 2 residues coordinate substrate: Lys-442 and Lys-444. Residues 534-588 (LDVKESGKKSHGRSLMANFGKHKQKATKSRSKSYSTDDEDDSLQNPGKEGGQLYR) are disordered. The segment covering 553-564 (GKHKQKATKSRS) has biased composition (basic residues). The PI-PLC Y-box domain maps to 602–715 (LSDLVVYTNS…GYILKPQQMC (114 aa)). Ser-628 and Arg-655 together coordinate substrate. One can recognise a C2 domain in the interval 716–844 (KGTFNPFSGD…PGYRHVYLEG (129 aa)). The Ca(2+) site is built by Ile-759, Asp-761, Asp-785, Asp-814, His-815, and Asp-816. Basic and acidic residues predominate over residues 992 to 1018 (DTDGKENCLAGDKDDRRKGAATRKDPH). Disordered regions lie at residues 992–1083 (DTDG…LSPR), 1296–1321 (NLPGFPDASPGQFPKSPTHGEDHSQV), and 1581–1603 (RAKEKQEAGKQKAMAQSTRGGVV). The span at 1019–1033 (FSNFNKKLSSSSSAL) shows a compositional bias: low complexity. Composition is skewed to polar residues over residues 1040–1050 (QGPTASVSNPE) and 1065–1074 (NMTNDCQENH). Residues 1581–1590 (RAKEKQEAGK) show a composition bias toward basic and acidic residues.

It depends on Ca(2+) as a cofactor. In terms of tissue distribution, expressed in brain and to a lower extent in lung. In brain, it is found in cerebrum, cerebellum and spinal cord.

It is found in the cytoplasm. Its subcellular location is the membrane. The catalysed reaction is a 1,2-diacyl-sn-glycero-3-phospho-(1D-myo-inositol-4,5-bisphosphate) + H2O = 1D-myo-inositol 1,4,5-trisphosphate + a 1,2-diacyl-sn-glycerol + H(+). Functionally, the production of the second messenger molecules diacylglycerol (DAG) and inositol 1,4,5-trisphosphate (IP3) is mediated by calcium-activated phosphatidylinositol-specific phospholipase C enzymes. The protein is 1-phosphatidylinositol 4,5-bisphosphate phosphodiesterase eta-1 of Mus musculus (Mouse).